Consider the following 147-residue polypeptide: Ribosome maturation factor RimP (147 aa).

The protein belongs to the RimP family.

It is found in the cytoplasm. Required for maturation of 30S ribosomal subunits. The sequence is that of Ribosome maturation factor RimP from Legionella pneumophila (strain Lens).